The chain runs to 1605 residues: Zinc finger protein jing homolog (1605 aa).

Residues 1–15 (MQHQSLSVRNSSGIS) show a composition bias toward polar residues. Disordered regions lie at residues 1 to 28 (MQHQ…VRSS), 60 to 117 (QWPW…QQSN), 359 to 388 (TRKV…TSDP), 441 to 468 (QQHQ…TQAQ), 856 to 877 (STTS…PPKL), 917 to 947 (TKAT…ASCT), and 991 to 1213 (NDSG…TDFL). A compositionally biased stretch (low complexity) spans 64–117 (NTSNNTNATNSNNVQSNNNSSTATSNSSTNSNNSPAVNTPTTQNQSQPTTQQSN). A compositionally biased stretch (polar residues) spans 991 to 1000 (NDSGIVANSS). The span at 1021-1030 (PQKKDEESRQ) shows a compositional bias: basic and acidic residues. Residues 1035-1049 (SPVPSPSPLSEPPVI) show a composition bias toward pro residues. Composition is skewed to acidic residues over residues 1053-1090 (SEPE…DEPH) and 1099-1110 (SSEAVELPELED). Over residues 1112-1126 (QPSPPLPCELPPPPT) the composition is skewed to pro residues. Over residues 1135–1149 (LSLPPSQKSPKSLLL) the composition is skewed to low complexity. Residues 1165–1201 (QESMSSDQDYSNQSPLDESSPTGSAEPSESQRSTTPV) are compositionally biased toward polar residues. The C2H2-type 1 zinc-finger motif lies at 1260–1285 (GVCYWSNCDAQFDTSSKLLDHLQIQH). The C2H2-type 2; degenerate zinc-finger motif lies at 1293–1320 (FACLWDGCKVHNKESCSRRWLERHVLSH). A C2H2-type 3 zinc finger spans residues 1326 to 1350 (HKCIVAGCGMRFGSQLALEKHVNHH). 2 disordered regions span residues 1352–1371 (NNTD…LPKV) and 1511–1605 (CSRS…SSTS). Low complexity-rich tracts occupy residues 1511-1537 (CSRS…SLIS) and 1556-1605 (KQSY…SSTS).

The protein belongs to the AEBP2/jing C2H2-type zinc-finger family.

It is found in the nucleus. May functionally interact with Polycomb group (PcG) and trithorax group (trxG) proteins to repress transcription. The polypeptide is Zinc finger protein jing homolog (Aedes aegypti (Yellowfever mosquito)).